A 517-amino-acid polypeptide reads, in one-letter code: GMP synthase [glutamine-hydrolyzing] (517 aa).

Residues 9–199 (RILILDFGSQ…VLGVCGCERL (191 aa)) enclose the Glutamine amidotransferase type-1 domain. The active-site Nucleophile is the Cys86. Catalysis depends on residues His173 and Glu175. In terms of domain architecture, GMPS ATP-PPase spans 200-392 (WTSESIIEDA…LGLPYNMLYR (193 aa)). 227–233 (SGGVDSS) is an ATP binding site.

As to quaternary structure, homodimer.

The catalysed reaction is XMP + L-glutamine + ATP + H2O = GMP + L-glutamate + AMP + diphosphate + 2 H(+). It participates in purine metabolism; GMP biosynthesis; GMP from XMP (L-Gln route): step 1/1. Its function is as follows. Catalyzes the synthesis of GMP from XMP. In Vibrio parahaemolyticus serotype O3:K6 (strain RIMD 2210633), this protein is GMP synthase [glutamine-hydrolyzing].